Consider the following 179-residue polypeptide: UPF0227 protein Shewmr4_1727 (179 aa).

Belongs to the UPF0227 family.

This Shewanella sp. (strain MR-4) protein is UPF0227 protein Shewmr4_1727.